Consider the following 424-residue polypeptide: UDP-N-acetylglucosamine 1-carboxyvinyltransferase (424 aa).

22 to 23 (KN) is a phosphoenolpyruvate binding site. Arginine 93 provides a ligand contact to UDP-N-acetyl-alpha-D-glucosamine. Residue cysteine 117 is the Proton donor of the active site. A 2-(S-cysteinyl)pyruvic acid O-phosphothioketal modification is found at cysteine 117. UDP-N-acetyl-alpha-D-glucosamine contacts are provided by residues 122–126 (RPIDL), aspartate 307, and valine 329.

This sequence belongs to the EPSP synthase family. MurA subfamily.

It is found in the cytoplasm. It carries out the reaction phosphoenolpyruvate + UDP-N-acetyl-alpha-D-glucosamine = UDP-N-acetyl-3-O-(1-carboxyvinyl)-alpha-D-glucosamine + phosphate. It functions in the pathway cell wall biogenesis; peptidoglycan biosynthesis. Cell wall formation. Adds enolpyruvyl to UDP-N-acetylglucosamine. This Chlorobium limicola (strain DSM 245 / NBRC 103803 / 6330) protein is UDP-N-acetylglucosamine 1-carboxyvinyltransferase.